Consider the following 113-residue polypeptide: ATP-dependent Clp protease adapter protein ClpS (113 aa).

This sequence belongs to the ClpS family. In terms of assembly, binds to the N-terminal domain of the chaperone ClpA.

Functionally, involved in the modulation of the specificity of the ClpAP-mediated ATP-dependent protein degradation. The protein is ATP-dependent Clp protease adapter protein ClpS of Corynebacterium diphtheriae (strain ATCC 700971 / NCTC 13129 / Biotype gravis).